A 286-amino-acid polypeptide reads, in one-letter code: Forkhead box protein E3 (286 aa).

The tract at residues 1–62 (MDAHVAFSGF…GRRRRRPLQR (62 aa)) is disordered. Positions 64 to 158 (KPPYSYIALI…DNGSFLRRRK (95 aa)) form a DNA-binding region, fork-head.

Its subcellular location is the nucleus. Functionally, transcription factor that controls lens epithelial cell growth through regulation of proliferation, apoptosis and cell cycle. During lens development, controls the ratio of the lens fiber cells to the cells of the anterior lens epithelium by regulating the rate of proliferation and differentiation. Controls lens vesicle closure and subsequent separation of the lens vesicle from ectoderm. Controls the expression of DNAJB1 in a pathway that is crucial for the development of the anterior segment of the eye. This is Forkhead box protein E3 (Foxe3) from Rattus norvegicus (Rat).